The chain runs to 455 residues: Argininosuccinate lyase (455 aa).

This sequence belongs to the lyase 1 family. Argininosuccinate lyase subfamily.

The protein localises to the cytoplasm. The catalysed reaction is 2-(N(omega)-L-arginino)succinate = fumarate + L-arginine. Its pathway is amino-acid biosynthesis; L-arginine biosynthesis; L-arginine from L-ornithine and carbamoyl phosphate: step 3/3. The sequence is that of Argininosuccinate lyase from Shewanella baltica (strain OS185).